The sequence spans 480 residues: MSSSEGVVHVAFLPSAGMGHLNPFLRLAATFIRYGCKVTLITPKPTVSLAESNLISRFCSSFPHQVTQLDLNLVSVDPTTVDTIDPFFLQFETIRRSLHLLPPILSLLSTPLSAFIYDITLITPLLSVIEKLSCPSYLYFTSSARMFSFFARVSVLSASNPGQTPSSFIGDDGVKIPGFTSPIPRSSVPPAILQASSNLFQRIMLEDSANVTKLNNGVFINSFEELEGEALAALNGGKVLEGLPPVYGVGPLMACEYEKGDEEGQKGCMSSIVKWLDEQSKGSVVYVSLGNRTETRREQIKDMALGLIECGYGFLWVVKLKRVDKEDEEGLEEVLGSELSSKVKEKGVVVKEFVDQVEILGHPSVGGFLSHGGWNSVTETVWKGVPCLSWPQHSDQKMSAEVIRMSGMGIWPEEWGWGTQDVVKGDEIAKRIKEMMSNESLRVKAGELKEAALKAAGVGGSCEVTIKRQIEEWKRNAQAN.

Residue His-20 is the Proton acceptor of the active site. An an anthocyanidin-binding site is contributed by His-20. The active-site Charge relay is the Asp-118. Thr-141 contacts UDP-alpha-D-glucose. The tract at residues 291 to 292 (NR) is UDP. UDP-alpha-D-glucose contacts are provided by Val-354, Gln-356, His-371, Trp-374, Asn-375, Ser-376, Glu-379, Asp-395, and Gln-396.

Belongs to the UDP-glycosyltransferase family.

It carries out the reaction a 3'-hydro-2'-hydroxy-beta-oxodihydrochalcone + UDP-alpha-D-glucose = a 3'-(beta-D-glucopyranosyl)-2'-hydroxy-beta-oxodihydrochalcone + UDP + H(+). Functionally, UDP-glucose-dependent glucosyltransferase catalyzing the c-glucosylation of the A ring of 2-hydroxynaringenin. Also active toward phloretin, but not toward naringenin and apigenin. The polypeptide is UDP-glycosyltransferase 708D1 (Glycine max (Soybean)).